A 357-amino-acid chain; its full sequence is Protein-L-isoaspartate O-methyltransferase domain-containing protein 1 (357 aa).

A lipid anchor (N-myristoyl glycine) is attached at glycine 2. Residue serine 64 is part of the active site. AdoMet binding motif stretches follow at residues 85 to 94 (LNLGSGTGYL), 160 to 164 (YDRIY), and 181 to 191 (LKVGGILVMPI). Positions 240–250 (VRNLQDLARIY) are BC-box. A disordered region spans residues 299–331 (PLDSEEDEKMEEDSKEEEEKEHIEAMKREEPPQ). The span at 301–317 (DSEEDEKMEEDSKEEEE) shows a compositional bias: acidic residues. A compositionally biased stretch (basic and acidic residues) spans 318–331 (KEHIEAMKREEPPQ). Positions 341–344 (LPLP) are CUL-box.

It belongs to the methyltransferase superfamily. L-isoaspartyl/D-aspartyl protein methyltransferase family. As to quaternary structure, component of the probable ECS(PCMTD1) E3 ubiquitin-protein ligase complex, at least composed of CUL5, ELOB, ELOC, RBX2 and PCMTD1. Interacts (via the BC-box) with ELOB and ELOC; the interaction is direct and stabilizes PCMTD1.

The protein resides in the cytoplasm. Its subcellular location is the membrane. Its function is as follows. Substrate recognition component of an ECS (Elongin BC-CUL5-SOCS-box protein) E3 ubiquitin ligase complex which mediates the ubiquitination and subsequent proteasomal degradation of target proteins. Specifically binds to the methyltransferase cofactor S-adenosylmethionine (AdoMet) via the N-terminal AdoMet binding motif, but does not display methyltransferase activity. May provide an alternate maintenance pathway for modified proteins by acting as a damage-specific E3 ubiquitin ligase adaptor protein. This chain is Protein-L-isoaspartate O-methyltransferase domain-containing protein 1 (Pcmtd1), found in Mus musculus (Mouse).